Consider the following 194-residue polypeptide: Serine/threonine-protein kinase mos (194 aa).

The 148-residue stretch at 47–194 (LCLLNLLGSG…HLDLKPANIF (148 aa)) folds into the Protein kinase domain. Residues 53–61 (LGSGGFGSV) and lysine 74 contribute to the ATP site. The active-site Proton acceptor is aspartate 187.

This sequence belongs to the protein kinase superfamily. Ser/Thr protein kinase family.

The enzyme catalyses L-seryl-[protein] + ATP = O-phospho-L-seryl-[protein] + ADP + H(+). It catalyses the reaction L-threonyl-[protein] + ATP = O-phospho-L-threonyl-[protein] + ADP + H(+). In Dendroaspis angusticeps (Eastern green mamba), this protein is Serine/threonine-protein kinase mos (MOS).